Consider the following 217-residue polypeptide: Probable transaldolase (217 aa).

The active-site Schiff-base intermediate with substrate is the Lys-85.

Belongs to the transaldolase family. Type 3B subfamily.

Its subcellular location is the cytoplasm. The catalysed reaction is D-sedoheptulose 7-phosphate + D-glyceraldehyde 3-phosphate = D-erythrose 4-phosphate + beta-D-fructose 6-phosphate. It participates in carbohydrate degradation; pentose phosphate pathway; D-glyceraldehyde 3-phosphate and beta-D-fructose 6-phosphate from D-ribose 5-phosphate and D-xylulose 5-phosphate (non-oxidative stage): step 2/3. Functionally, transaldolase is important for the balance of metabolites in the pentose-phosphate pathway. This chain is Probable transaldolase, found in Brachyspira hyodysenteriae (strain ATCC 49526 / WA1).